The sequence spans 151 residues: Ribonuclease H (151 aa).

The region spanning 1–141 (MKHVDIFTDG…ADELARRGME (141 aa)) is the RNase H type-1 domain. Mg(2+) contacts are provided by D9, E47, D69, and D133.

This sequence belongs to the RNase H family. In terms of assembly, monomer. It depends on Mg(2+) as a cofactor.

The protein resides in the cytoplasm. It carries out the reaction Endonucleolytic cleavage to 5'-phosphomonoester.. In terms of biological role, endonuclease that specifically degrades the RNA of RNA-DNA hybrids. The sequence is that of Ribonuclease H from Rhizobium etli (strain ATCC 51251 / DSM 11541 / JCM 21823 / NBRC 15573 / CFN 42).